Here is a 135-residue protein sequence, read N- to C-terminus: Ribosomal RNA large subunit methyltransferase H (135 aa).

S-adenosyl-L-methionine contacts are provided by residues leucine 52, glycine 83, and 102–107; that span reads LSSLTL.

Belongs to the RNA methyltransferase RlmH family. Homodimer.

The protein localises to the cytoplasm. The catalysed reaction is pseudouridine(1915) in 23S rRNA + S-adenosyl-L-methionine = N(3)-methylpseudouridine(1915) in 23S rRNA + S-adenosyl-L-homocysteine + H(+). Its function is as follows. Specifically methylates the pseudouridine at position 1915 (m3Psi1915) in 23S rRNA. The polypeptide is Ribosomal RNA large subunit methyltransferase H (Polynucleobacter necessarius subsp. necessarius (strain STIR1)).